The primary structure comprises 282 residues: Reaction center protein L chain (282 aa).

Residues 2-32 (ALLSFERKYRVPGGTLVGGNLFDFWVGPFYV) lie on the Cytoplasmic side of the membrane. A helical transmembrane segment spans residues 33–56 (GFFGVATFFFAALGIILIAWSAVL). Residues 57–83 (QGTWNPQLISVYPPALEYGLGGAPLAK) are Periplasmic-facing. Residues 84 to 112 (GGLWQIITICATGAFVSWALREVEICRKL) form a helical membrane-spanning segment. The Cytoplasmic portion of the chain corresponds to 113–116 (GIGY). Residues 117–139 (HIPFAFAFAILAYLTLVLFRPVM) form a helical membrane-spanning segment. Over 140–171 (MGAWGYAFPYGIWTHLDWVSNTGYTYGNFHYN) the chain is Periplasmic. Residues H154 and H174 each coordinate (7R,8Z)-bacteriochlorophyll b. A helical membrane pass occupies residues 172 to 199 (PAHMIAISFFFTNALALALHGALVLSAA). H191 lines the Fe cation pocket. At 200–225 (NPEKGKEMRTPDHEDTFFRDLVGYSI) the chain is on the cytoplasmic side. Residue F217 coordinates a ubiquinone. The helical transmembrane segment at 226–251 (GTLGIHRLGLLLSLSAVFFSALCMII) threads the bilayer. Residue H231 coordinates Fe cation. Residues 252 to 282 (TGTIWFDQWVDWWQWWVKLPWWANIPGGING) are Periplasmic-facing.

This sequence belongs to the reaction center PufL/M/PsbA/D family. Reaction center is composed of four bacteriochlorophylls, two bacteriopheophytins, two ubiquinones, one iron, and three highly hydrophobic polypeptide chains (designated L, M, and H).

It localises to the cellular chromatophore membrane. The reaction center is a membrane-bound complex that mediates the initial photochemical event in the electron transfer process of photosynthesis. The sequence is that of Reaction center protein L chain (pufL) from Cereibacter sphaeroides (strain ATCC 17023 / DSM 158 / JCM 6121 / CCUG 31486 / LMG 2827 / NBRC 12203 / NCIMB 8253 / ATH 2.4.1.) (Rhodobacter sphaeroides).